Consider the following 319-residue polypeptide: Chromoplast-specific carotenoid-associated protein C1, chromoplastic (319 aa).

A chromoplast-targeting transit peptide spans 1 to 55 (MTSIAFWNAFTVNPFPAAARRSPPPLTPFTSGALSPARKPRILEISHPRTLPSFR).

The protein belongs to the PAP/fibrillin family. Expressed in flower buds and floral lip tissues. Not detected in roots and leaves. Specifically expressed in conical papillate cells of adaxial epidermis of lip tissues.

The protein resides in the plastid. It is found in the chromoplast. Functionally, may be involved in carotenoid sequestration within chromoplasts. The polypeptide is Chromoplast-specific carotenoid-associated protein C1, chromoplastic (CHRC1) (Oncidium hybrid cultivar (Orchid)).